A 288-amino-acid chain; its full sequence is UTP--glucose-1-phosphate uridylyltransferase (288 aa).

The protein belongs to the UDPGP type 2 family.

It catalyses the reaction alpha-D-glucose 1-phosphate + UTP + H(+) = UDP-alpha-D-glucose + diphosphate. Its pathway is glycolipid metabolism; diglucosyl-diacylglycerol biosynthesis. Catalyzes the formation of UDP-glucose from glucose-1-phosphate and UTP. This is an intermediate step in the biosynthesis of diglucosyl-diacylglycerol (Glc2-DAG), i.e. the predominant glycolipid found in the S.aureus membrane, which is also used as a membrane anchor for lipoteichoic acid (LTA). The sequence is that of UTP--glucose-1-phosphate uridylyltransferase (gtaB) from Staphylococcus aureus (strain MRSA252).